The following is a 70-amino-acid chain: uncharacterized protein (70 aa).

This is an uncharacterized protein from Rickettsia conorii (strain ATCC VR-613 / Malish 7).